The sequence spans 251 residues: Triosephosphate isomerase (251 aa).

9 to 11 is a substrate binding site; sequence NWK. His-95 acts as the Electrophile in catalysis. The Proton acceptor role is filled by Glu-167. Substrate-binding positions include Gly-173, Ser-213, and 234–235; that span reads GG. Phosphoserine is present on Ser-213.

It belongs to the triosephosphate isomerase family. As to quaternary structure, homodimer.

The protein resides in the cytoplasm. The enzyme catalyses D-glyceraldehyde 3-phosphate = dihydroxyacetone phosphate. The protein operates within carbohydrate biosynthesis; gluconeogenesis. It participates in carbohydrate degradation; glycolysis; D-glyceraldehyde 3-phosphate from glycerone phosphate: step 1/1. Functionally, involved in the gluconeogenesis. Catalyzes stereospecifically the conversion of dihydroxyacetone phosphate (DHAP) to D-glyceraldehyde-3-phosphate (G3P). This is Triosephosphate isomerase from Bacillus mycoides (strain KBAB4) (Bacillus weihenstephanensis).